Reading from the N-terminus, the 446-residue chain is Tripartite motif-containing protein 43B (446 aa).

Residues 15–56 form an RING-type zinc finger; it reads CVICLNYLVDPVTICCGHSFCRPCLCLSWEEAQSPANCPACR. The B box-type zinc finger occupies 88–129; sequence SEKQICGTHRQTKKMFCDMDKSLLCLLCSNSQEHGAHKHYPI. Zn(2+) is bound by residues Cys-93, His-96, Cys-115, and His-121. 2 coiled-coil regions span residues 129–158 and 190–220; these read IEEA…QRNL and LHKE…VKMD. The B30.2/SPRY domain maps to 269–446; it reads ELTAGPITGL…VRPFFYTGHR (178 aa).

Belongs to the TRIM/RBCC family.

This is Tripartite motif-containing protein 43B (TRIM43B) from Homo sapiens (Human).